A 166-amino-acid polypeptide reads, in one-letter code: Protein UTR5 (166 aa).

The sequence is that of Protein UTR5 (UTR5) from Saccharomyces cerevisiae (strain ATCC 204508 / S288c) (Baker's yeast).